We begin with the raw amino-acid sequence, 405 residues long: Phosphopentomutase (405 aa).

Asp-10, Asp-305, His-310, Asp-346, His-347, and His-358 together coordinate Mn(2+).

The protein belongs to the phosphopentomutase family. Requires Mn(2+) as cofactor.

Its subcellular location is the cytoplasm. The enzyme catalyses 2-deoxy-alpha-D-ribose 1-phosphate = 2-deoxy-D-ribose 5-phosphate. It carries out the reaction alpha-D-ribose 1-phosphate = D-ribose 5-phosphate. The protein operates within carbohydrate degradation; 2-deoxy-D-ribose 1-phosphate degradation; D-glyceraldehyde 3-phosphate and acetaldehyde from 2-deoxy-alpha-D-ribose 1-phosphate: step 1/2. In terms of biological role, isomerase that catalyzes the conversion of deoxy-ribose 1-phosphate (dRib-1-P) and ribose 1-phosphate (Rib-1-P) to deoxy-ribose 5-phosphate (dRib-5-P) and ribose 5-phosphate (Rib-5-P), respectively. This Methylorubrum extorquens (strain CM4 / NCIMB 13688) (Methylobacterium extorquens) protein is Phosphopentomutase.